The sequence spans 299 residues: Adenylate kinase (299 aa).

Positions 1–30 (MATTTTRGARDSPFPAPSEGEIKKELNMKG) are disordered. Residue 85–90 (GAGKGT) participates in ATP binding. Residues 107–136 (ATGDMLREQVSKQTELGKMAKKIMDQGGLV) form an NMP region. Residues T108, R113, 134–136 (GLV), 163–166 (GFPR), and Q170 each bind AMP. The tract at residues 204-241 (GRLVHPASGRSYHKEFSPPKKPMTDDVTGEPLIQRSDD) is LID. Residues R205 and 214-215 (SY) contribute to the ATP site. A disordered region spans residues 212–237 (GRSYHKEFSPPKKPMTDDVTGEPLIQ). Residues 215 to 227 (YHKEFSPPKKPMT) are compositionally biased toward basic and acidic residues. Positions 238 and 249 each coordinate AMP. ATP is bound at residue Q277.

This sequence belongs to the adenylate kinase family. AK2 subfamily. Monomer.

The protein localises to the cytoplasm. Its subcellular location is the cytosol. It is found in the mitochondrion intermembrane space. The catalysed reaction is AMP + ATP = 2 ADP. Functionally, catalyzes the reversible transfer of the terminal phosphate group between ATP and AMP. Plays an important role in cellular energy homeostasis and in adenine nucleotide metabolism. Adenylate kinase activity is critical for regulation of the phosphate utilization and the AMP de novo biosynthesis pathways. This is Adenylate kinase from Mycosarcoma maydis (Corn smut fungus).